Here is a 217-residue protein sequence, read N- to C-terminus: Pyridoxine/pyridoxamine 5'-phosphate oxidase (217 aa).

Residues 66 to 71, 81 to 82, Arg-87, Lys-88, and Gln-110 each bind FMN; these read RMVLLK and FT. Lys-71 lines the substrate pocket. Residues Tyr-128, Arg-132, and Ser-136 each contribute to the substrate site. Residues 145–146 and Trp-190 contribute to the FMN site; that span reads QS. Position 196-198 (196-198) interacts with substrate; the sequence is RLH. Residue Arg-200 coordinates FMN.

Belongs to the pyridoxamine 5'-phosphate oxidase family. As to quaternary structure, homodimer. FMN serves as cofactor.

It catalyses the reaction pyridoxamine 5'-phosphate + O2 + H2O = pyridoxal 5'-phosphate + H2O2 + NH4(+). The enzyme catalyses pyridoxine 5'-phosphate + O2 = pyridoxal 5'-phosphate + H2O2. Its pathway is cofactor metabolism; pyridoxal 5'-phosphate salvage; pyridoxal 5'-phosphate from pyridoxamine 5'-phosphate: step 1/1. The protein operates within cofactor metabolism; pyridoxal 5'-phosphate salvage; pyridoxal 5'-phosphate from pyridoxine 5'-phosphate: step 1/1. Catalyzes the oxidation of either pyridoxine 5'-phosphate (PNP) or pyridoxamine 5'-phosphate (PMP) into pyridoxal 5'-phosphate (PLP). The sequence is that of Pyridoxine/pyridoxamine 5'-phosphate oxidase from Colwellia psychrerythraea (strain 34H / ATCC BAA-681) (Vibrio psychroerythus).